Here is a 313-residue protein sequence, read N- to C-terminus: Pseudouridine kinase (313 aa).

The protein belongs to the carbohydrate kinase PfkB family.

It carries out the reaction pseudouridine + ATP = psi-UMP + ADP + H(+). Catalyzes the phosphorylation of pseudouridine to pseudouridine 5'-phosphate (PsiMP). This Escherichia coli (strain K12) protein is Pseudouridine kinase (psuK).